A 396-amino-acid polypeptide reads, in one-letter code: Multidrug resistance protein MdtL (396 aa).

Residues 1 to 4 lie on the Cytoplasmic side of the membrane; that stretch reads MFRY. Residues 5 to 25 form a helical membrane-spanning segment; that stretch reads LLCCFGLVLMYPTGIDMYLVG. Residues 26–41 lie on the Periplasmic side of the membrane; the sequence is LPQIANQLGATEAQLH. Residues 42-62 traverse the membrane as a helical segment; it reads IAFSVYLAGMATTMLFAGSLA. Residues 63–64 are Cytoplasmic-facing; it reads DR. Residues 65 to 85 form a helical membrane-spanning segment; it reads IGRKPITLFSALLFALASYFA. Residues 86-92 lie on the Periplasmic side of the membrane; that stretch reads ARSQSSD. A helical membrane pass occupies residues 93–113; sequence LFLVARFVQGVGAGCCYVVAF. Topologically, residues 114–131 are cytoplasmic; that stretch reads AILRDALDDKRRAKVLSM. Residues 132-152 traverse the membrane as a helical segment; the sequence is VNGVTCIIPVIAPVIGHLIML. The Periplasmic portion of the chain corresponds to 153 to 157; the sequence is RFPWP. Residues 158–178 form a helical membrane-spanning segment; it reads SLFYTMAVMGLLVFGLCLFVL. Topologically, residues 179–209 are cytoplasmic; it reads RETYSKASFHSQTLPRVQTESFKQGFFISRV. A helical transmembrane segment spans residues 210–230; sequence VITTLGVTTILSYVNVSPMLI. The Periplasmic segment spans residues 231 to 242; that stretch reads MGQMGFDRGQYS. Residues 243–263 form a helical membrane-spanning segment; the sequence is NTMAMTALVSMLASFSTPFLL. Topologically, residues 264 to 277 are cytoplasmic; sequence NQFKEKSLILFSQT. A run of 2 helical transmembrane segments spans residues 278 to 298 and 299 to 319; these read LFAA…GQLF and NLLG…VTMS. Topologically, residues 320 to 333 are cytoplasmic; it reads QALSPFVARAGVAS. Residues 334 to 354 form a helical membrane-spanning segment; it reads SLLGIAQVCTSALYIWVMGLL. The Periplasmic segment spans residues 355 to 360; the sequence is EVSAIN. The chain crosses the membrane as a helical span at residues 361-381; the sequence is ILLAILAVGALISITLMLAVP. The Cytoplasmic segment spans residues 382–396; that stretch reads KLSEMVANEQIPESA.

Belongs to the major facilitator superfamily. DHA1 family. MdtL (TC 2.A.1.2.22) subfamily.

The protein resides in the cell inner membrane. The sequence is that of Multidrug resistance protein MdtL from Shewanella sp. (strain ANA-3).